The following is a 95-amino-acid chain: MGLMDIHNAVCSLVIGVAILIATSQATFVDWGSSITSMGDFWESTCSAVGVSIAFSSGFSVLFYMGLVAVISALLAGSYHACFRLFTADMFKEEW.

A signal peptide spans 1–26; it reads MGLMDIHNAVCSLVIGVAILIATSQA. Topologically, residues 27-55 are virion surface; that stretch reads TFVDWGSSITSMGDFWESTCSAVGVSIAF. A helical membrane pass occupies residues 56-76; sequence SSGFSVLFYMGLVAVISALLA. Over 77 to 95 the chain is Intravirion; it reads GSYHACFRLFTADMFKEEW.

The protein belongs to the herpesviridae glycoprotein N family. In terms of assembly, interacts (via N-terminus) with gM (via N-terminus). The gM-gN heterodimer forms the gCII complex.

It localises to the virion membrane. It is found in the host membrane. The protein resides in the host Golgi apparatus. The protein localises to the host trans-Golgi network. In terms of biological role, envelope glycoprotein necessary for proper maturation of gM and modulation of its membrane fusion activity. Also plays a critical role in virion morphogenesis. The protein is Envelope glycoprotein N of Gallus gallus (Chicken).